The primary structure comprises 132 residues: NADPH-dependent 7-cyano-7-deazaguanine reductase (132 aa).

The Thioimide intermediate role is filled by C48. D55 serves as the catalytic Proton donor. Substrate is bound by residues L70 to L72 and M89 to E90.

This sequence belongs to the GTP cyclohydrolase I family. QueF type 1 subfamily.

The protein localises to the cytoplasm. It carries out the reaction 7-aminomethyl-7-carbaguanine + 2 NADP(+) = 7-cyano-7-deazaguanine + 2 NADPH + 3 H(+). It functions in the pathway tRNA modification; tRNA-queuosine biosynthesis. Catalyzes the NADPH-dependent reduction of 7-cyano-7-deazaguanine (preQ0) to 7-aminomethyl-7-deazaguanine (preQ1). The protein is NADPH-dependent 7-cyano-7-deazaguanine reductase of Elusimicrobium minutum (strain Pei191).